We begin with the raw amino-acid sequence, 365 residues long: Endophilin-B1 (365 aa).

M1 carries the N-acetylmethionine modification. Positions 1 to 30 (MNIMDFNVKKLAADAGTFLSRAVQFTEEKL) are membrane-binding amphipathic helix. Positions 1-37 (MNIMDFNVKKLAADAGTFLSRAVQFTEEKLGQAEKTE) are required for membrane binding. The BAR domain maps to 27–261 (EEKLGQAEKT…LGSFPSNYHS (235 aa)). T145 is modified (phosphothreonine; by CDK5). The stretch at 155 to 195 (YKTIAKERKLLQNKRLDLDAAKTRLKKAKAAETRASSEQEL) forms a coiled coil. One can recognise an SH3 domain in the interval 305–365 (GGSRRARVLY…VPITYLELLN (61 aa)).

It belongs to the endophilin family. In terms of assembly, homodimer, and heterodimer with SH3GLB2. Binds BAX; induction of apoptosis augments BAX binding. Binds DNM1, HTT, AMPH, BIN1 and ARFGAP1. Interacts with UVRAG; UVRAG bridges the interaction to BECN1 indicative for an association with the PI3K complex II (PI3KC3-C2). Post-translationally, phosphorylated at Thr-145 by CDK5; this phosphorylation is required for autophagy induction in starved neurons and facilitates homodimerization.

Its subcellular location is the cytoplasm. The protein localises to the golgi apparatus membrane. It is found in the mitochondrion outer membrane. It localises to the cytoplasmic vesicle. The protein resides in the autophagosome membrane. Its subcellular location is the midbody. Its function is as follows. May be required for normal outer mitochondrial membrane dynamics. Required for coatomer-mediated retrograde transport in certain cells. May recruit other proteins to membranes with high curvature. May promote membrane fusion. Involved in activation of caspase-dependent apoptosis by promoting BAX/BAK1 activation. Involved in caspase-independent apoptosis during nutrition starvation and involved in the regulation of autophagy. Activates lipid kinase activity of PIK3C3 during autophagy probably by associating with the PI3K complex II (PI3KC3-C2). Associated with PI3KC3-C2 during autophagy may regulate the trafficking of ATG9A from the Golgi complex to the peripheral cytoplasm for the formation of autophagosomes by inducing Golgi membrane tubulation and fragmentation. Involved in regulation of degradative endocytic trafficking and cytokinesis, probably in the context of PI3KC3-C2. This chain is Endophilin-B1 (SH3GLB1), found in Bos taurus (Bovine).